The sequence spans 367 residues: MPFLGQDWRSPGWSWIKTEDGWKRCESCSQKLERENNRCNISHSIILNSEDGEIFNNEEHEYASKKRKKDHFRNDTNTQSFYREKWIYVHKESTKERHGYCTLGEAFNRLDFSSAIQDIRRFNYVVKLLQLIAKSQLTSLSGVAQKNYFNILDKIVQKVLDDHHNPRLIKDLLQDLSSTLCILIRGVGKSVLVGNINIWICRLETILAWQQQLQDLQMTKQVNNGLTLSDLPLHMLNNILYRFSDGWDIITLGQVTPTLYMLSEDRQLWKKLCQYHFAEKQFCRHLILSEKGHIEWKLMYFALQKHYPAKEQYGDTLHFCRHCSILFWKDYHLALLFKDSGHPCTAADPDSCFTPVSPQHFIDLFKF.

Residues 1 to 83 (MPFLGQDWRS…NDTNTQSFYR (83 aa)) form an interaction with beta-actin region. Positions 226-274 (LTLSDLPLHMLNNILYRFSDGWDIITLGQVTPTLYMLSEDRQLWKKLCQ) constitute an F-box domain.

As to quaternary structure, part of a SCF (SKP1-cullin-F-box) protein ligase complex consisting of FBXO25, SKP1, CUL1 and RBX1. Interacts directly with SKP1 and CUL1. Interacts (via C-terminus) with beta-actin (via N-terminus). Expressed in all brain tissue observed.

The protein localises to the nucleus. The protein operates within protein modification; protein ubiquitination. Functionally, substrate-recognition component of the SCF (SKP1-CUL1-F-box protein)-type E3 ubiquitin ligase complex. May play a role in accumulation of expanded polyglutamine (polyQ) protein huntingtin (HTT). This chain is F-box only protein 25 (FBXO25), found in Homo sapiens (Human).